The following is a 415-amino-acid chain: WD-40 repeat-containing protein MSI2 (415 aa).

WD repeat units follow at residues 166–206 (GHDK…QDKV), 215–255 (GHES…MQHQ), 258–298 (VHER…APLH), 302–342 (SHEG…EEQL), and 361–401 (GHKA…YRDE). A DWD box motif is present at residues 232–248 (LFGSAGEDGRLVIWDTR).

This sequence belongs to the WD repeat RBAP46/RBAP48/MSI1 family.

Its subcellular location is the nucleus. Core histone-binding subunit that may target chromatin assembly factors, chromatin remodeling factors and histone deacetylases to their histone substrates in a manner that is regulated by nucleosomal DNA. The sequence is that of WD-40 repeat-containing protein MSI2 (MSI2) from Arabidopsis thaliana (Mouse-ear cress).